The primary structure comprises 182 residues: LPS-assembly lipoprotein LptE (182 aa).

The N-terminal stretch at 1-19 (MRHRILTLLLGLAVLVTAG) is a signal peptide. A lipid anchor (N-palmitoyl cysteine) is attached at C20. A lipid anchor (S-diacylglycerol cysteine) is attached at C20.

This sequence belongs to the LptE lipoprotein family. Component of the lipopolysaccharide transport and assembly complex. Interacts with LptD.

The protein localises to the cell outer membrane. Together with LptD, is involved in the assembly of lipopolysaccharide (LPS) at the surface of the outer membrane. Required for the proper assembly of LptD. Binds LPS and may serve as the LPS recognition site at the outer membrane. The polypeptide is LPS-assembly lipoprotein LptE (Photorhabdus laumondii subsp. laumondii (strain DSM 15139 / CIP 105565 / TT01) (Photorhabdus luminescens subsp. laumondii)).